An 89-amino-acid polypeptide reads, in one-letter code: Small ribosomal subunit protein uS17 (89 aa).

This sequence belongs to the universal ribosomal protein uS17 family. As to quaternary structure, part of the 30S ribosomal subunit.

One of the primary rRNA binding proteins, it binds specifically to the 5'-end of 16S ribosomal RNA. The protein is Small ribosomal subunit protein uS17 of Chlorobium phaeobacteroides (strain BS1).